The primary structure comprises 162 residues: Ribonuclease (162 aa).

Positions 1–29 (MKKISSVFTMFALIAAILFSGFIPQQAYA) are cleaved as a signal peptide. Residues 30 to 53 (ETPLTQTATNETATIQLTSDVHTL) constitute a propeptide that is removed on maturation. Glutamate 125 (proton acceptor) is an active-site residue. The active-site Proton donor is histidine 154.

The protein belongs to the ribonuclease N1/T1 family.

It is found in the secreted. In terms of biological role, this is a purine-specific ribonuclease. This is Ribonuclease from Bacillus intermedius.